An 84-amino-acid chain; its full sequence is Small ribosomal subunit protein bS16 (84 aa).

The protein belongs to the bacterial ribosomal protein bS16 family.

The chain is Small ribosomal subunit protein bS16 from Paraburkholderia phytofirmans (strain DSM 17436 / LMG 22146 / PsJN) (Burkholderia phytofirmans).